Here is a 264-residue protein sequence, read N- to C-terminus: Thymidylate synthase (264 aa).

Arginine 21 lines the dUMP pocket. Residue histidine 51 coordinates (6R)-5,10-methylene-5,6,7,8-tetrahydrofolate. Arginine 126 to arginine 127 contacts dUMP. The active-site Nucleophile is cysteine 146. Residues arginine 166 to aspartate 169, asparagine 177, and histidine 207 to tyrosine 209 contribute to the dUMP site. Residue aspartate 169 coordinates (6R)-5,10-methylene-5,6,7,8-tetrahydrofolate. Position 263 (alanine 263) interacts with (6R)-5,10-methylene-5,6,7,8-tetrahydrofolate.

The protein belongs to the thymidylate synthase family. Bacterial-type ThyA subfamily. In terms of assembly, homodimer.

The protein localises to the cytoplasm. It carries out the reaction dUMP + (6R)-5,10-methylene-5,6,7,8-tetrahydrofolate = 7,8-dihydrofolate + dTMP. The protein operates within pyrimidine metabolism; dTTP biosynthesis. Functionally, catalyzes the reductive methylation of 2'-deoxyuridine-5'-monophosphate (dUMP) to 2'-deoxythymidine-5'-monophosphate (dTMP) while utilizing 5,10-methylenetetrahydrofolate (mTHF) as the methyl donor and reductant in the reaction, yielding dihydrofolate (DHF) as a by-product. This enzymatic reaction provides an intracellular de novo source of dTMP, an essential precursor for DNA biosynthesis. The sequence is that of Thymidylate synthase from Klebsiella pneumoniae subsp. pneumoniae (strain ATCC 700721 / MGH 78578).